A 286-amino-acid polypeptide reads, in one-letter code: MKNDNGQQLSLTQALDLLKSRQGKNFKTADKIIENFCFYDYSNIIMKYDYKSGKKRILNILNSELDVENLNELPCDEKLTFSNAYYSWVTAIFVDIRKSTELFTNENKKDVSRLIRSFTSEIIEIINQGDNLREIGIRGDCVYGIFTTPKKSQINEVFDMACYVNTMIKMLNKLLIKEDIPQIMVGIGVSSAQELVVKAGRKGSGVNNKVWIGDAVTKAANMSGKGNKNHNLPIIISELTYKNLNDHNKGLMSSRKYNDDLDYYYDCDLIISAFNDWINKGMLDNE.

The Guanylate cyclase domain occupies 90–223 (TAIFVDIRKS…DAVTKAANMS (134 aa)). Phenylalanine 93 serves as a coordination point for a ribonucleoside 5'-triphosphate. Positions 95, 96, and 140 each coordinate Mn(2+).

The protein belongs to the adenylyl cyclase class-4/guanylyl cyclase family. Pyrimidine cyclase subfamily. As to quaternary structure, homodimer. The cofactor is Mn(2+).

It localises to the cytoplasm. It catalyses the reaction UTP = 3',5'-cyclic UMP + diphosphate. Its function is as follows. Pycsar (pyrimidine cyclase system for antiphage resistance) provides immunity against bacteriophage. The pyrimidine cyclase (PycC) synthesizes cyclic nucleotides in response to infection; these serve as specific second messenger signals. The signals activate the adjacent effector, leading to bacterial cell death and abortive phage infection. A clade C Pycsar system. Functionally, the pyrimidine cyclase gene of a two-gene Pycsar system, weakly generates cyclic UMP (cUMP) from UTP, has little to no activity on ATP, CTP or GTP. Expression of this and adjacent effector TpPycTM (AC A0A1T4LJG1) probably confers resistance to bacteriophage. The genes are probably only expressed in response to bacteriophage infection. In Treponema porcinum, this protein is Uridylate cyclase.